The primary structure comprises 374 residues: Isocitrate dehydrogenase [NAD] catalytic subunit 6, mitochondrial (374 aa).

Residues Met1 to Ile44 constitute a mitochondrion transit peptide. Positions 127, 137, 158, and 245 each coordinate substrate. Residues Asp245, Asp269, and Asp273 each contribute to the Mg(2+) site.

This sequence belongs to the isocitrate and isopropylmalate dehydrogenases family. In terms of assembly, heterooligomer of catalytic and regulatory subunits. Mg(2+) is required as a cofactor. Requires Mn(2+) as cofactor. In terms of tissue distribution, ubiquitous. Predominantly expressed in leaves.

Its subcellular location is the mitochondrion. It catalyses the reaction D-threo-isocitrate + NAD(+) = 2-oxoglutarate + CO2 + NADH. Catalytic subunit of the NAD(+)-dependent isocitrate dehydrogenase involved in the oxidative decarboxylation of isocitrate to 2-oxoglutarate. Performs an essential role in the oxidative function of the citric acid cycle. This Arabidopsis thaliana (Mouse-ear cress) protein is Isocitrate dehydrogenase [NAD] catalytic subunit 6, mitochondrial (IDH6).